We begin with the raw amino-acid sequence, 263 residues long: 4-hydroxy-2-oxo-heptane-1,7-dioate aldolase (263 aa).

Residue histidine 45 is the Proton acceptor of the active site. Glutamine 147 contacts substrate. Glutamate 149 provides a ligand contact to a divalent metal cation. 2 residues coordinate substrate: alanine 174 and aspartate 175. Aspartate 175 provides a ligand contact to a divalent metal cation.

Belongs to the HpcH/HpaI aldolase family. As to quaternary structure, homohexamer; trimer of dimers. Requires a divalent metal cation as cofactor.

The enzyme catalyses 4-hydroxy-2-oxoheptanedioate = succinate semialdehyde + pyruvate. It participates in aromatic compound metabolism; 4-hydroxyphenylacetate degradation; pyruvate and succinate semialdehyde from 4-hydroxyphenylacetate: step 7/7. Catalyzes the reversible retro-aldol cleavage of 4-hydroxy-2-ketoheptane-1,7-dioate (HKHD) to pyruvate and succinic semialdehyde. This is 4-hydroxy-2-oxo-heptane-1,7-dioate aldolase from Salmonella typhimurium (strain LT2 / SGSC1412 / ATCC 700720).